Here is a 908-residue protein sequence, read N- to C-terminus: MATIHVDGKEYEVNGADNLLEACLSLGLDIPYFCWHPALGSVGACRQCAVKQYQNAEDTRGRLVMSCMTPASDGTFISIDDEEAKQFRESVVEWLMTNHPHDCPVCEEGGNCHLQDMTVMTGHSFRRYRFTKRTHRNQDLGPFISHEMNRCIACYRCVRYYKDYADGTDLGVYGAHDNVYFGRPEDGTLESEFSGNLVEICPTGVFTDKTHSERYNRKWDMQFAPSICQQCSIGCNISPGERYGELRRIENRYNGTVNHYFLCDRGRFGYGYVNLKDRPRQPVQRRGDDFITLNAEQAMQGAADILRQSKKVIGIGSPRASVESNFALRELVGEENFYTGIAHGEQERLQLALKVLREGGIYTPALREIESYDAVLVLGEDVTQTGARVALAVRQAVKGKAREMAAAQKVADWQIAAILNIGQRAKHPLFVTNVDDTRLDDIAAWTYRAPVEDQARLGFAIAHALDNSAPAVDGIEPELQSKIDVIVQALAGAKKPLIISGTNAGSLEVIQAAANVAKALKGRGADVGITMIARSVNSMGLGIMGGGSLEEALTELETGRADAVVVLENDLHRHASAIRVNAALAKAPLVMVVDHQRTAIMENAHLVLSAASFAESDGTVINNEGRAQRFFQVYDPAYYDSKTVMLESWRWLHSLHSTLLSREVDWTQLDHVIDAVVAKIPELAGIKDAAPDATFRIRGQKLAREPHRYSGRTAMRANISVHEPRQPQDIDTMFTFSMEGNNQPTAHRSQVPFAWAPGWNSPQAWNKFQDEVGGKLRFGDPGVRLFETSENGLDYFTSVPARFQPQDGKWRIAPYYHLFGSDELSQRAPVFQSRMPQPYIKLNPADAAKLGVNAGTRVSFSYDGNTVTLPVEIAEGLTAGQVGLPMGMSGIAPVLAGAHLEDLKEAQQ.

A 2Fe-2S ferredoxin-type domain is found at 2-83 (ATIHVDGKEY…GTFISIDDEE (82 aa)). Cysteine 34, cysteine 45, cysteine 48, and cysteine 67 together coordinate [2Fe-2S] cluster. Residues 83–122 (EAKQFRESVVEWLMTNHPHDCPVCEEGGNCHLQDMTVMTG) form the 4Fe-4S His(Cys)3-ligated-type domain. The [4Fe-4S] cluster site is built by histidine 99, cysteine 103, cysteine 106, cysteine 112, cysteine 151, cysteine 154, cysteine 157, cysteine 201, cysteine 228, cysteine 231, cysteine 235, and cysteine 263. Positions 221 to 277 (MQFAPSICQQCSIGCNISPGERYGELRRIENRYNGTVNHYFLCDRGRFGYGYVNLKD) constitute a 4Fe-4S Mo/W bis-MGD-type domain.

This sequence belongs to the complex I 75 kDa subunit family. In terms of assembly, composed of 13 different subunits. Subunits NuoCD, E, F, and G constitute the peripheral sector of the complex. [2Fe-2S] cluster is required as a cofactor. Requires [4Fe-4S] cluster as cofactor.

It is found in the cytoplasm. The protein resides in the cell inner membrane. It carries out the reaction a quinone + NADH + 5 H(+)(in) = a quinol + NAD(+) + 4 H(+)(out). In terms of biological role, NDH-1 shuttles electrons from NADH, via FMN and iron-sulfur (Fe-S) centers, to quinones in the respiratory chain. The immediate electron acceptor for the enzyme in this species is believed to be ubiquinone. Couples the redox reaction to proton translocation (for every two electrons transferred, four hydrogen ions are translocated across the cytoplasmic membrane), and thus conserves the redox energy in a proton gradient. The chain is NADH-quinone oxidoreductase subunit G (nuoG) from Escherichia coli (strain K12).